Reading from the N-terminus, the 166-residue chain is Lipoprotein signal peptidase (166 aa).

The next 4 helical transmembrane spans lie at 11–31, 42–62, 67–87, and 90–110; these read VWLW…TLVV, LLPV…SFLS, WQRW…VWWL, and LPAT…GAIG. Catalysis depends on residues Asp-123 and Asp-141. A helical membrane pass occupies residues 133-153; the sequence is HFPVFNVADCAICIGAALLLF.

Belongs to the peptidase A8 family.

Its subcellular location is the cell inner membrane. It carries out the reaction Release of signal peptides from bacterial membrane prolipoproteins. Hydrolyzes -Xaa-Yaa-Zaa-|-(S,diacylglyceryl)Cys-, in which Xaa is hydrophobic (preferably Leu), and Yaa (Ala or Ser) and Zaa (Gly or Ala) have small, neutral side chains.. The protein operates within protein modification; lipoprotein biosynthesis (signal peptide cleavage). This protein specifically catalyzes the removal of signal peptides from prolipoproteins. The chain is Lipoprotein signal peptidase from Pseudoalteromonas translucida (strain TAC 125).